The chain runs to 134 residues: uncharacterized protein (134 aa).

The signal sequence occupies residues 1–37 (MSYIKRDHTALRDIAMKTFLKVVGLAASLSAASVAFS).

This is an uncharacterized protein from Coxiella burnetii (strain RSA 493 / Nine Mile phase I).